The chain runs to 409 residues: DNA primase DnaG (409 aa).

The Toprim domain maps to 175 to 261 (DAIIVVEGRA…EVEELTRKEI (87 aa)). Mg(2+) contacts are provided by Glu181, Asp223, and Asp225. Over residues 280 to 289 (ERPKDKEREK) the composition is skewed to basic and acidic residues. Residues 280–322 (ERPKDKEREKGKKPKPKKRPERRGRPRKKKARPKRGPQERRLL) form a disordered region. The span at 290–314 (GKKPKPKKRPERRGRPRKKKARPKR) shows a compositional bias: basic residues.

This sequence belongs to the archaeal DnaG primase family. As to quaternary structure, forms a ternary complex with MCM helicase and DNA. Component of the archaeal exosome complex. Mg(2+) is required as a cofactor.

The enzyme catalyses ssDNA + n NTP = ssDNA/pppN(pN)n-1 hybrid + (n-1) diphosphate.. RNA polymerase that catalyzes the synthesis of short RNA molecules used as primers for DNA polymerase during DNA replication. Also part of the exosome, which is a complex involved in RNA degradation. Acts as a poly(A)-binding protein that enhances the interaction between heteromeric, adenine-rich transcripts and the exosome. The chain is DNA primase DnaG from Methanopyrus kandleri (strain AV19 / DSM 6324 / JCM 9639 / NBRC 100938).